The sequence spans 27 residues: Cupiennin-4b (27 aa).

At glutamine 27 the chain carries Glutamine amide.

As to expression, expressed by the venom gland.

The protein resides in the secreted. The protein is Cupiennin-4b of Cupiennius salei (American wandering spider).